A 106-amino-acid polypeptide reads, in one-letter code: MPFLDIQKRFGLNIDRWLTIQSGEQPYKMAGRCHAFEKEWIECAHGIGYTRAEKECKIEYDDFVECLLRQKTMRRAGTIRKQRDKLIKEGKYTPPPHHIGKGEPRP.

The 45-residue stretch at 30 to 74 folds into the CHCH domain; the sequence is AGRCHAFEKEWIECAHGIGYTRAEKECKIEYDDFVECLLRQKTMR. 2 consecutive short sequence motifs (cx9C motif) follow at residues 33-43 and 56-66; these read CHAFEKEWIEC and CKIEYDDFVEC. 2 disulfide bridges follow: C33–C66 and C43–C56. The segment at 84 to 106 is disordered; it reads DKLIKEGKYTPPPHHIGKGEPRP.

Belongs to the complex I NDUFS5 subunit family. In terms of assembly, mammalian complex I is composed of 45 different subunits. This is a component of the iron-sulfur (IP) fragment of the enzyme.

The protein localises to the mitochondrion inner membrane. The protein resides in the mitochondrion intermembrane space. Its function is as follows. Accessory subunit of the mitochondrial membrane respiratory chain NADH dehydrogenase (Complex I), that is believed not to be involved in catalysis. Complex I functions in the transfer of electrons from NADH to the respiratory chain. The immediate electron acceptor for the enzyme is believed to be ubiquinone. The sequence is that of NADH dehydrogenase [ubiquinone] iron-sulfur protein 5 (NDUFS5) from Homo sapiens (Human).